Reading from the N-terminus, the 412-residue chain is Putative competence-damage inducible protein (412 aa).

It belongs to the CinA family.

The protein is Putative competence-damage inducible protein of Bacillus cereus (strain AH187).